The following is an 862-amino-acid chain: Short transient receptor potential channel 7 (862 aa).

The interval 1 to 21 is disordered; it reads MLGSNTFKNMQRRHTTLREKG. At 1-351 the chain is on the cytoplasmic side; that stretch reads MLGSNTFKNM…GLRQQSIAVK (351 aa). Basic residues predominate over residues 10-21; the sequence is MQRRHTTLREKG. Position 15 is a phosphothreonine; by PKG/PRKG1 (Thr15). 4 ANK repeats span residues 42 to 71, 77 to 106, 108 to 134, and 163 to 192; these read PEEERFLDSAEYGNIPVVRKMLEESKTLNF, MGQNALQLAVGNEHLEVTELLLKKENLARV, DALLLAISKGYVRIVEAILSHPAFAQG, and HDITPIILAAHCQEYEIVHILLLKGARIER. A helical membrane pass occupies residues 352 to 372; that stretch reads FLAVFGVSIGLPFLAIAYWIA. Over 373–383 the chain is Extracellular; sequence PCSKLGQTLRS. Residues 384-404 traverse the membrane as a helical segment; that stretch reads PFMKFVAHAVSFTIFLGLLVV. The Cytoplasmic segment spans residues 405–465; sequence NASDRFEGVK…KEIWEEGPRE (61 aa). A helical membrane pass occupies residues 466–486; the sequence is YVLHLWNLLDFGMLSIFVASF. Topologically, residues 487-537 are extracellular; it reads TARFMAFLKASEAQLYVDQYVQDVTLHNVSLPPEVAYFTYARDKWWPSDPQ. The N-linked (GlcNAc...) asparagine glycan is linked to Asn514. A helical membrane pass occupies residues 538–558; the sequence is IISEGLYAIAVVLSFSRIAYI. Topologically, residues 559-581 are cytoplasmic; sequence LPANESFGPLQISLGRTVKDIFK. A helical transmembrane segment spans residues 582–602; that stretch reads FMVIFIMVFVAFMIGMFNLYS. The Extracellular segment spans residues 603–651; the sequence is YYRGAKYNPAFTTVEESFKTLFWSIFGLSEVISVVLKYDHKFIENIGYV. The chain crosses the membrane as a helical span at residues 652–672; the sequence is LYGVYNVTMVVVLLNMLIAMI. The Cytoplasmic portion of the chain corresponds to 673-862; it reads NNSYQEIEED…HLRVNQGKDI (190 aa).

It belongs to the transient receptor (TC 1.A.4) family. STrpC subfamily. TRPC7 sub-subfamily. Interacts with MX1 and RNF24. Interacts (via ANK-repeat domains) with PRKG1. Post-translationally, phosphorylation by PRKG1 at Thr-15 negatively regulates TRPC7 activity.

It is found in the cell membrane. It localises to the nucleus envelope. It catalyses the reaction Ca(2+)(in) = Ca(2+)(out). Functionally, forms a receptor-activated non-selective calcium permeant cation channel. Probably is operated by a phosphatidylinositol second messenger system activated by receptor tyrosine kinases or G-protein coupled receptors. Activated by diacylglycerol (DAG). May also be activated by intracellular calcium store depletion. In Mus musculus (Mouse), this protein is Short transient receptor potential channel 7 (Trpc7).